Here is a 525-residue protein sequence, read N- to C-terminus: Nucleolar complex protein 4 homolog B (525 aa).

Basic residues predominate over residues 1–10 (MAARKAKHAF). A disordered region spans residues 1-21 (MAARKAKHAFRSQATQSDAER). 3 helical membrane-spanning segments follow: residues 307 to 327 (AAYDVGGAISLLALNGLFILI), 358 to 378 (FFHLANLFLSSTHLPVYLVAA), and 386 to 406 (LALTAPPQVLLMIIPFICNLI).

This sequence belongs to the CBF/MAK21 family.

Its subcellular location is the nucleus membrane. It localises to the nucleus. The protein resides in the nucleolus. In Xenopus laevis (African clawed frog), this protein is Nucleolar complex protein 4 homolog B (noc4l-b).